The chain runs to 247 residues: Lys-63-specific deubiquitinase BRCC36 (247 aa).

Alanine 2 carries the post-translational modification N-acetylalanine. Residues 12 to 179 (VHLESDAFLV…YTCFQSIQAQ (168 aa)) form the MPN domain. Residues histidine 122, histidine 124, and aspartate 135 each coordinate Zn(2+). The JAMM motif motif lies at 122–135 (HSHPHITVWPSHVD). The residue at position 189 (serine 189) is a Phosphoserine.

This sequence belongs to the peptidase M67A family. BRCC36 subfamily. As to quaternary structure, component of the ARISC complex, at least composed of UIMC1/RAP80, ABRAXAS1, BRCC3/BRCC36, BABAM2 and BABAM1/NBA1. Component of the BRCA1-A complex, at least composed of BRCA1, BARD1, UIMC1/RAP80, ABRAXAS1, BRCC3/BRCC36, BABAM2 and BABAM1/NBA1. In the BRCA1-A complex, interacts directly with ABRAXAS1 and BABAM2. Component of the BRISC complex, at least composed of ABRAXAS2, BRCC3/BRCC36, BABAM2 and BABAM1/NBA1. Identified in a complex with SHMT2 and the other subunits of the BRISC complex. In the BRISC complex, interacts directly with ABRAXAS2. Identified in a complex with ABRAXAS2 and NUMA1. The BRISC complex interacts with the CSN complex. Component of the BRCA1/BRCA2 containing complex (BRCC), which also contains BRCA1, BRCA2, BARD1, BABAM2 and RAD51. BRCC is a ubiquitin E3 ligase complex that enhances cellular survival following DNA damage. Interacts with BRCA1. Binds polyubiquitin. Interacts with PWWP2B. Interacts with HDAC1; this interaction is enhanced in the presence of PWWP2B. It depends on Zn(2+) as a cofactor.

The protein resides in the nucleus. It is found in the cytoplasm. Its subcellular location is the cytoskeleton. It localises to the spindle pole. Metalloprotease that specifically cleaves 'Lys-63'-linked polyubiquitin chains. Does not have activity toward 'Lys-48'-linked polyubiquitin chains. Component of the BRCA1-A complex, a complex that specifically recognizes 'Lys-63'-linked ubiquitinated histones H2A and H2AX at DNA lesions sites, leading to target the BRCA1-BARD1 heterodimer to sites of DNA damage at double-strand breaks (DSBs). In the BRCA1-A complex, it specifically removes 'Lys-63'-linked ubiquitin on histones H2A and H2AX, antagonizing the RNF8-dependent ubiquitination at double-strand breaks (DSBs). Catalytic subunit of the BRISC complex, a multiprotein complex that specifically cleaves 'Lys-63'-linked ubiquitin in various substrates. Mediates the specific 'Lys-63'-specific deubiquitination associated with the COP9 signalosome complex (CSN), via the interaction of the BRISC complex with the CSN complex. The BRISC complex is required for normal mitotic spindle assembly and microtubule attachment to kinetochores via its role in deubiquitinating NUMA1. Plays a role in interferon signaling via its role in the deubiquitination of the interferon receptor IFNAR1; deubiquitination increases IFNAR1 activity by enhancing its stability and cell surface expression. Acts as a regulator of the NLRP3 inflammasome by mediating deubiquitination of NLRP3, leading to NLRP3 inflammasome assembly. Down-regulates the response to bacterial lipopolysaccharide (LPS) via its role in IFNAR1 deubiquitination. Deubiquitinates HDAC1 and PWWP2B leading to their stabilization. The sequence is that of Lys-63-specific deubiquitinase BRCC36 (BRCC3) from Pongo abelii (Sumatran orangutan).